The primary structure comprises 280 residues: MVLDQTKKLLIVIIGALLNAAGLNLFLIPADVYASGFTGVAQLLSSVVDQYAPFYISTGTLLFLLNIPVGILGWLKVGKSFTVYSILSVALTTLFMGILPETSLSHDILLNAVFGGVISAVGIGLTLKYGASTGGLDIVAMVLAKWKDKPVGTYFFILNGIIILTAGLLQGWEKALYTLVTLYVTTRVIDAIHTRHMKLTAMIVTKKADEIKEAIYGKMVRGITTVPAKGAFTNEQKEMMIIVITRYELYDLEKIVKEVDPKAFTNIVQTTGIFGFFRKD.

The next 4 helical transmembrane spans lie at 9-29 (LLIV…FLIP), 54-74 (FYIS…ILGW), 80-100 (SFTV…GILP), and 151-171 (VGTY…LLQG).

Belongs to the UPF0750 family.

The protein localises to the cell membrane. This Bacillus subtilis (strain 168) protein is UPF0750 membrane protein YitT (yitT).